We begin with the raw amino-acid sequence, 31 residues long: MKKLERMSEVSQMCSEAKKNRKRMSVVSSVA.

The interval 1 to 31 (MKKLERMSEVSQMCSEAKKNRKRMSVVSSVA) is disordered.

This is an uncharacterized protein from Sulfolobus islandicus filamentous virus (isolate Iceland/Hveragerdi) (SIFV).